A 353-amino-acid chain; its full sequence is Guanidino acid hydrolase, mitochondrial (353 aa).

A mitochondrion-targeting transit peptide spans 1–33; the sequence is MLQLLKSSWVRSAGSGVVTWRASAGLFCPGTRQ. Residues 29-52 are disordered; that stretch reads PGTRQASDTSDTLHHPSPSSESQV. His-163 and His-188 together coordinate Mn(2+). Lys-194 carries the post-translational modification N6-acetyllysine. At Lys-218 the chain carries N6-acetyllysine; alternate. Residue Lys-218 is modified to N6-succinyllysine; alternate. A Mn(2+)-binding site is contributed by Asp-279.

The protein belongs to the arginase family. Agmatinase subfamily. The cofactor is Mn(2+).

The protein localises to the mitochondrion. It catalyses the reaction 3-guanidinopropanoate + H2O = urea + beta-alanine. It carries out the reaction 4-guanidinobutanoate + H2O = urea + 4-aminobutanoate. The catalysed reaction is taurocyamine + H2O = urea + taurine. The enzyme catalyses L-arginine + H2O = urea + L-ornithine. It participates in nitrogen metabolism; urea cycle; L-ornithine and urea from L-arginine: step 1/1. Functionally, hydrolyzes linear guanidino acids to form urea and the corresponding amines. Displays specificity for substrates having a negatively charged head group and short chains including taurocyamine, guanidino propanoic and butanoic acids. May protect cells by detoxifying potentially harmful amounts of guanidino acids. Metabolizes L-arginine with low efficiency. This chain is Guanidino acid hydrolase, mitochondrial (Agmat), found in Rattus norvegicus (Rat).